Consider the following 159-residue polypeptide: V-type proton ATPase 16 kDa proteolipid subunit c (159 aa).

Topologically, residues 1–12 (MSSEVSSDNPIY) are lumenal. A helical membrane pass occupies residues 13 to 35 (GPFFGVMGAASAIIFSALGAAYG). Residues 36-57 (TAKSGTGIAAMSVMRPELIMKS) lie on the Cytoplasmic side of the membrane. A helical membrane pass occupies residues 58 to 78 (IIPVVMAGIIAIYGLVVAVLI). Residues 79-96 (AGALEEPSKYSLYRGFIH) lie on the Lumenal side of the membrane. The helical transmembrane segment at 97 to 118 (LGAGLAVGFSGLAAGFAIGIVG) threads the bilayer. The Cytoplasmic portion of the chain corresponds to 119–130 (DAGVRGTAQQPR). A helical transmembrane segment spans residues 131 to 156 (LFVGMILILIFAEVLGLYGLIVAIYL). At 157 to 159 (YTK) the chain is on the lumenal side.

It belongs to the V-ATPase proteolipid subunit family. As to quaternary structure, V-ATPase is a heteromultimeric enzyme made up of two complexes: the ATP-hydrolytic V1 complex and the proton translocation V0 complex. The V1 complex consists of three catalytic AB heterodimers that form a heterohexamer, three peripheral stalks each consisting of EG heterodimers, one central rotor including subunits D and F, and the regulatory subunits C and H. The proton translocation complex V0 consists of the proton transport subunit a, a ring of proteolipid subunits c9c'', rotary subunit d, subunits e and f, and the accessory subunits VhaAC45 and ATP6AP2. Expressed in the larval middle mid-gut; predominantly in the copper cell region with lower levels of expression in the interstitial cells.

It localises to the membrane. Functionally, proton-conducting pore forming subunit of the V0 complex of vacuolar(H+)-ATPase (V-ATPase), a multisubunit enzyme composed of a peripheral complex (V1) that hydrolyzes ATP and a membrane integral complex (V0) that translocates protons. V-ATPase is responsible for acidifying and maintaining the pH of intracellular compartments and in some cell types, is targeted to the plasma membrane, where it is responsible for acidifying the extracellular environment. In enterocytes, acts as part of a pHCl-2 sensory pathway which mediates Tor-dependent larval growth and metabolism in response to zinc availability. Likely acts in maintaining enterocyte lysosomal acidification which consequently promotes Tor activation at the lysosome membrane. This Drosophila melanogaster (Fruit fly) protein is V-type proton ATPase 16 kDa proteolipid subunit c (Vha16-1).